A 413-amino-acid polypeptide reads, in one-letter code: Enhanced ethylene response protein 5 (413 aa).

Residues 216–402 (VTYMYYTGRL…KVVVLSKQDP (187 aa)) enclose the PCI domain.

In terms of assembly, interacts with EIN2 (via C-terminus). May also interact weakly with CSN8. Interacts with DSS1(V), AMPD, SAC3A, SAC3B and At5g61290 (AC Q9FLK4). Interacts with UCH1 and UCH2. Interacts with NUP1, anchoring the TREX-2 complex on the nuclear pore complex. As to expression, expressed at low levels in roots, leaves, stems and shoots. Detected in seedlings, roots, leaves and anthers.

It is found in the nucleus. Functionally, involved in the regulation of ethylene response. Probable TREX-2 component required for nuclear RNA export. The TREX-2 complex (transcription and export complex 2) functions in docking export-competent ribonucleoprotein particles (mRNPs) to the nuclear entrance of the nuclear pore complex (nuclear basket). TREX-2 participates in mRNA export and accurate chromatin positioning in the nucleus by tethering genes to the nuclear periphery. The chain is Enhanced ethylene response protein 5 from Arabidopsis thaliana (Mouse-ear cress).